Consider the following 96-residue polypeptide: ATP synthase subunit c (96 aa).

Transmembrane regions (helical) follow at residues F9–I29 and I58–I78.

Belongs to the ATPase C chain family. In terms of assembly, F-type ATPases have 2 components, F(1) - the catalytic core - and F(0) - the membrane proton channel. F(1) has five subunits: alpha(3), beta(3), gamma(1), delta(1), epsilon(1). F(0) has three main subunits: a(1), b(2) and c(10-14). The alpha and beta chains form an alternating ring which encloses part of the gamma chain. F(1) is attached to F(0) by a central stalk formed by the gamma and epsilon chains, while a peripheral stalk is formed by the delta and b chains.

It localises to the cell inner membrane. Functionally, f(1)F(0) ATP synthase produces ATP from ADP in the presence of a proton or sodium gradient. F-type ATPases consist of two structural domains, F(1) containing the extramembraneous catalytic core and F(0) containing the membrane proton channel, linked together by a central stalk and a peripheral stalk. During catalysis, ATP synthesis in the catalytic domain of F(1) is coupled via a rotary mechanism of the central stalk subunits to proton translocation. Key component of the F(0) channel; it plays a direct role in translocation across the membrane. A homomeric c-ring of between 10-14 subunits forms the central stalk rotor element with the F(1) delta and epsilon subunits. This Desulfosudis oleivorans (strain DSM 6200 / JCM 39069 / Hxd3) (Desulfococcus oleovorans) protein is ATP synthase subunit c.